We begin with the raw amino-acid sequence, 1240 residues long: Serine/threonine-protein kinase TAO2 (1240 aa).

Ser9 carries the phosphoserine modification. Positions Phe28–Val281 constitute a Protein kinase domain. ATP-binding positions include Ile34 to Val42 and Lys57. The active-site Proton acceptor is Asp151. Ser181 bears the Phosphoserine mark. A disordered region spans residues Ala320 to Arg463. Positions Ser356 to Ala380 are enriched in low complexity. The segment covering Ser381–Gly401 has biased composition (acidic residues). Residues Pro402–Val417 show a composition bias toward basic and acidic residues. Ser422 is modified (phosphoserine). 2 coiled-coil regions span residues Ser493–Ser528 and Lys581–Asn608. Ser663 is subject to Phosphoserine. Positions Leu688–Glu720 form a coiled coil. Phosphoserine is present on residues Ser782, Ser830, and Ser832. Residues Arg805–Pro934 are a coiled coil. The interval Val899–Pro946 is disordered. The span at Pro904–Gly914 shows a compositional bias: acidic residues. The span at Pro931–Ser940 shows a compositional bias: pro residues. The next 5 helical transmembrane spans lie at Leu972–Leu992, Ala994–Cys1014, Leu1019–Leu1039, Leu1045–Leu1065, and Leu1175–Gly1195. Residue Leu999 is modified to Omega-N-methylarginine. Leu1037 carries the post-translational modification Phosphoserine. The interval Leu1212–Arg1240 is disordered.

The protein belongs to the protein kinase superfamily. STE Ser/Thr protein kinase family. STE20 subfamily. In terms of assembly, interacts with MAP2K3 and MAP2K6. Self-associates. Interacts with tubulins. Interacts with MAP3K7 and interferes with MAP3K7-binding to CHUK and thus prevents NF-kappa-B activation. Isoform 2 interacts with PCDH8; this complex may also include CDH2. It depends on Mg(2+) as a cofactor. In terms of processing, autophosphorylated. Phosphorylated by ATM. Post-translationally, phosphorylated on Ser-1037 by MAPK14. This phosphorylation is required PCDH8 for endocytosis.

Its subcellular location is the cytoplasmic vesicle membrane. It localises to the cytoplasm. The protein resides in the cytoskeleton. It is found in the cell projection. The protein localises to the dendrite. The catalysed reaction is L-seryl-[protein] + ATP = O-phospho-L-seryl-[protein] + ADP + H(+). It carries out the reaction L-threonyl-[protein] + ATP = O-phospho-L-threonyl-[protein] + ADP + H(+). Functionally, serine/threonine-protein kinase involved in different processes such as membrane blebbing and apoptotic bodies formation DNA damage response and MAPK14/p38 MAPK stress-activated MAPK cascade. Phosphorylates itself, MBP, activated MAPK8, MAP2K3, MAP2K6 and tubulins. Activates the MAPK14/p38 MAPK signaling pathway through the specific activation and phosphorylation of the upstream MAP2K3 and MAP2K6 kinases. In response to DNA damage, involved in the G2/M transition DNA damage checkpoint by activating the p38/MAPK14 stress-activated MAPK cascade, probably by mediating phosphorylation of upstream MAP2K3 and MAP2K6 kinases. May affect microtubule organization and stability. May play a role in the osmotic stress-MAPK8 pathway. Prevents MAP3K7-mediated activation of CHUK, and thus NF-kappa-B activation. Isoform 2, but not isoform 1, is required for PCDH8 endocytosis. Following homophilic interactions between PCDH8 extracellular domains, isoform 2 phosphorylates and activates MAPK14/p38 MAPK which in turn phosphorylates isoform 2. This process leads to PCDH8 endocytosis and CDH2 cointernalization. Both isoforms are involved in MAPK14/p38 MAPK activation. The sequence is that of Serine/threonine-protein kinase TAO2 (Taok2) from Mus musculus (Mouse).